The chain runs to 230 residues: Ribosomal RNA small subunit methyltransferase G (230 aa).

S-adenosyl-L-methionine-binding positions include glycine 91, leucine 96, 142–143, and arginine 161; that span reads VE.

The protein belongs to the methyltransferase superfamily. RNA methyltransferase RsmG family.

Its subcellular location is the cytoplasm. The enzyme catalyses guanosine(527) in 16S rRNA + S-adenosyl-L-methionine = N(7)-methylguanosine(527) in 16S rRNA + S-adenosyl-L-homocysteine. In terms of biological role, specifically methylates the N7 position of guanine in position 527 of 16S rRNA. The protein is Ribosomal RNA small subunit methyltransferase G of Burkholderia pseudomallei (strain K96243).